The following is a 517-amino-acid chain: Maturase K (517 aa).

This sequence belongs to the intron maturase 2 family. MatK subfamily.

The protein resides in the plastid. The protein localises to the chloroplast. Its function is as follows. Usually encoded in the trnK tRNA gene intron. Probably assists in splicing its own and other chloroplast group II introns. This chain is Maturase K, found in Trillium maculatum (Spotted wakerobin).